The following is a 268-amino-acid chain: Tryptophan synthase alpha chain (268 aa).

Residues Glu49 and Asp60 each act as proton acceptor in the active site.

The protein belongs to the TrpA family. As to quaternary structure, tetramer of two alpha and two beta chains.

It carries out the reaction (1S,2R)-1-C-(indol-3-yl)glycerol 3-phosphate + L-serine = D-glyceraldehyde 3-phosphate + L-tryptophan + H2O. It participates in amino-acid biosynthesis; L-tryptophan biosynthesis; L-tryptophan from chorismate: step 5/5. The alpha subunit is responsible for the aldol cleavage of indoleglycerol phosphate to indole and glyceraldehyde 3-phosphate. In Escherichia coli O6:K15:H31 (strain 536 / UPEC), this protein is Tryptophan synthase alpha chain.